The sequence spans 365 residues: DNA replication and repair protein RecF (365 aa).

An ATP-binding site is contributed by 30–37; it reads GRNAQGKT.

Belongs to the RecF family.

The protein resides in the cytoplasm. The RecF protein is involved in DNA metabolism; it is required for DNA replication and normal SOS inducibility. RecF binds preferentially to single-stranded, linear DNA. It also seems to bind ATP. This is DNA replication and repair protein RecF from Streptococcus pneumoniae serotype 4 (strain ATCC BAA-334 / TIGR4).